A 341-amino-acid chain; its full sequence is Heterogeneous nuclear ribonucleoproteins A2/B1 (341 aa).

2 consecutive RRM domains span residues 9–92 (RKLF…ESGK) and 100–179 (KKLF…LSRQ). A Glycyl lysine isopeptide (Lys-Gly) (interchain with G-Cter in SUMO2) cross-link involves residue K10. The residue at position 17 (S17) is a Phosphoserine. R26 bears the Omega-N-methylarginine mark. Phosphoserine is present on S73. K92 is subject to N6,N6-dimethyllysine; alternate. Residue K92 forms a Glycyl lysine isopeptide (Lys-Gly) (interchain with G-Cter in SUMO2); alternate linkage. Glycyl lysine isopeptide (Lys-Gly) (interchain with G-Cter in SUMO2) cross-links involve residues K100, K108, and K125. A Phosphothreonine modification is found at T128. S137 bears the Phosphoserine mark. A Glycyl lysine isopeptide (Lys-Gly) (interchain with G-Cter in SUMO2) cross-link involves residue K140. The residue at position 147 (T147) is a Phosphothreonine. Glycyl lysine isopeptide (Lys-Gly) (interchain with G-Cter in SUMO2); alternate cross-links involve residues K156 and K161. 2 positions are modified to N6-acetyllysine; alternate: K156 and K161. T164 is modified (phosphothreonine). K174 participates in a covalent cross-link: Glycyl lysine isopeptide (Lys-Gly) (interchain with G-Cter in SUMO2). 2 positions are modified to phosphoserine: S177 and S189. The interval 181–341 (MQEVQSSRSG…SGGYGGRSRY (161 aa)) is disordered. Residues 190-211 (GRGGNFGFGDSRGGGGNFGPGP) show a composition bias toward gly residues. At R191 the chain carries Asymmetric dimethylarginine; alternate. R191 carries the dimethylated arginine; alternate modification. Omega-N-methylarginine; alternate is present on R191. A Phosphoserine modification is found at S200. Residue R201 is modified to Asymmetric dimethylarginine; alternate. R201 carries the dimethylated arginine; alternate modification. R201 bears the Omega-N-methylarginine; alternate mark. S213 is modified (phosphoserine). At R216 the chain carries Omega-N-methylarginine. 2 positions are modified to phosphoserine: S219 and S224. Omega-N-methylarginine is present on R226. S247 is modified (phosphoserine). R254 is modified (asymmetric dimethylarginine; alternate). R254 carries the omega-N-methylarginine; alternate modification. The tract at residues 296-335 (QQPSNYGPMKSGNFGGSRNMGGPYGGGNYGPGGSGGSGGY) is nuclear targeting sequence. Residues 308–341 (NFGGSRNMGGPYGGGNYGPGGSGGSGGYGGRSRY) show a composition bias toward gly residues. S312 is subject to Phosphoserine. R313 bears the Omega-N-methylarginine mark. Residue Y319 is modified to Phosphotyrosine. Phosphoserine occurs at positions 329 and 332. At Y335 the chain carries Phosphotyrosine. R338 carries the post-translational modification Omega-N-methylarginine.

Identified in the spliceosome C complex. Identified in a IGF2BP1-dependent mRNP granule complex containing untranslated mRNAs. Interacts with IGF2BP1. Interacts with C9orf72. Interacts with DGCR8. Interacts with TARDBP. Interacts with CKAP5. Interacts with PPIA/CYPA. Interacts (via C-terminus) with FAM76B; the interaction results in retention of HNRNPA2B1 in the nucleus and inhibition of the NF-kappa-B-mediated inflammatory pathway. Interacts with NF-kappa-B inhibitors NFKBIA and NFKBIE; the interaction may be mediated by the RRM2 domain of HNRNPA2B1, and HNRNPA2B1 may interact simultaneously with FAM76B and either NFKBIA or NFKBIE to form a complex. In terms of processing, sumoylated in exosomes, promoting miRNAs-binding. Post-translationally, asymmetric dimethylation at Arg-254 constitutes the major methylation site. According to a report, methylation affects subcellular location and promotes nuclear localization. According to another report, methylation at Arg-254 does not influence nucleocytoplasmic shuttling.

The protein resides in the nucleus. It localises to the nucleoplasm. Its subcellular location is the cytoplasmic granule. It is found in the secreted. The protein localises to the extracellular exosome. In terms of biological role, heterogeneous nuclear ribonucleoprotein (hnRNP) that associates with nascent pre-mRNAs, packaging them into hnRNP particles. The hnRNP particle arrangement on nascent hnRNA is non-random and sequence-dependent and serves to condense and stabilize the transcripts and minimize tangling and knotting. Packaging plays a role in various processes such as transcription, pre-mRNA processing, RNA nuclear export, subcellular location, mRNA translation and stability of mature mRNAs. Forms hnRNP particles with at least 20 other different hnRNP and heterogeneous nuclear RNA in the nucleus. Involved in transport of specific mRNAs to the cytoplasm in oligodendrocytes and neurons: acts by specifically recognizing and binding the A2RE (21 nucleotide hnRNP A2 response element) or the A2RE11 (derivative 11 nucleotide oligonucleotide) sequence motifs present on some mRNAs, and promotes their transport to the cytoplasm. Specifically binds single-stranded telomeric DNA sequences, protecting telomeric DNA repeat against endonuclease digestion. Also binds other RNA molecules, such as primary miRNA (pri-miRNAs): acts as a nuclear 'reader' of the N6-methyladenosine (m6A) mark by specifically recognizing and binding a subset of nuclear m6A-containing pri-miRNAs. Binding to m6A-containing pri-miRNAs promotes pri-miRNA processing by enhancing binding of DGCR8 to pri-miRNA transcripts. Involved in miRNA sorting into exosomes following sumoylation, possibly by binding (m6A)-containing pre-miRNAs. Acts as a regulator of efficiency of mRNA splicing, possibly by binding to m6A-containing pre-mRNAs. Plays a role in the splicing of pyruvate kinase PKM by binding repressively to sequences flanking PKM exon 9, inhibiting exon 9 inclusion and resulting in exon 10 inclusion and production of the PKM M2 isoform. The polypeptide is Heterogeneous nuclear ribonucleoproteins A2/B1 (HNRNPA2B1) (Saguinus oedipus (Cotton-top tamarin)).